The chain runs to 140 residues: Putative nickel-responsive regulator 2 (140 aa).

The Ni(2+) site is built by His-77, His-88, His-90, and Cys-96.

The protein belongs to the transcriptional regulatory CopG/NikR family. Ni(2+) serves as cofactor.

In terms of biological role, transcriptional regulator. In Methanothermobacter thermautotrophicus (strain ATCC 29096 / DSM 1053 / JCM 10044 / NBRC 100330 / Delta H) (Methanobacterium thermoautotrophicum), this protein is Putative nickel-responsive regulator 2.